The sequence spans 365 residues: Putrescine carbamoyltransferase (365 aa).

Carbamoyl phosphate contacts are provided by residues 54 to 58 (STRTR), arginine 105, and histidine 132. 277-280 (HCLP) provides a ligand contact to putrescine.

The protein belongs to the aspartate/ornithine carbamoyltransferase superfamily. PTCase family. In terms of assembly, homotrimer.

Its subcellular location is the cytoplasm. It catalyses the reaction carbamoyl phosphate + putrescine = N-carbamoylputrescine + phosphate + H(+). The protein operates within amine and polyamine biosynthesis; putrescine biosynthesis via agmatine pathway; putrescine from N-carbamoylputrescine (transferase route): step 1/1. Catalyzes the phosphorolysis of N-carbamoylputrescine to form carbamoyl phosphate and putrescine. Is involved in the degradation pathway of the polyamine agmatine. The protein is Putrescine carbamoyltransferase of Mycoplasma mycoides subsp. mycoides SC (strain CCUG 32753 / NCTC 10114 / PG1).